A 266-amino-acid chain; its full sequence is Coiled-coil domain-containing glutamate-rich protein 2 (266 aa).

The signal sequence occupies residues 1 to 23 (MPPRGPASELLLLRLLLLGAATA). Composition is skewed to basic and acidic residues over residues 90-100 (EAGKMRSSQEV), 154-188 (LWQR…EKGV), 204-213 (GGGERREDLP), and 221-266 (QPEA…RREG). Residues 90 to 266 (EAGKMRSSQE…TLGEQLRREG (177 aa)) form a disordered region.

Expressed at higher levels in fetal brain and skeletal muscle. Lower expression is detected in fetal kidney, liver, spleen, thymus, heart and lung.

It localises to the secreted. The sequence is that of Coiled-coil domain-containing glutamate-rich protein 2 (CCER2) from Homo sapiens (Human).